Reading from the N-terminus, the 335-residue chain is MAFNLRNRSFLTLADFNTREMEYMLDLAEDLKKAKYAGYEGKNLKGKNIALIFEKSSTRTRCSFEVGAKDEGAHVTYLGPSGSHIGHKESVKDTARVLGGMFDGIEYRGFSQRNVEILAKYSGVPVWNGLTDEDHPTQVLADFLTAHEVLKKPYKDIKFAFVGDGQDNVSNALMLGAAVMGMEYHVVTPKELEPTKETLDKANEIAAKTGAKIVVTNDIKEGVKGMDVIYADVWVSMGESDDMWEKRINLLKPYQVTMDVMKATENPNVLFEHCLPAFHNLDTEVGKEIEKKFGLKEMEVTDEVFESEHSVVFREAENRMHTIKAVMVATLGEQN.

Carbamoyl phosphate contacts are provided by residues 57 to 60 (STRT), R108, and 135 to 138 (HPTQ). L-ornithine contacts are provided by residues N168, D232, and 236-237 (SM). Residues 274–275 (CL) and R319 contribute to the carbamoyl phosphate site.

It belongs to the aspartate/ornithine carbamoyltransferase superfamily. OTCase family.

Its subcellular location is the cytoplasm. The catalysed reaction is carbamoyl phosphate + L-ornithine = L-citrulline + phosphate + H(+). It participates in amino-acid degradation; L-arginine degradation via ADI pathway; carbamoyl phosphate from L-arginine: step 2/2. Functionally, reversibly catalyzes the transfer of the carbamoyl group from carbamoyl phosphate (CP) to the N(epsilon) atom of ornithine (ORN) to produce L-citrulline. In Limosilactobacillus reuteri (strain DSM 20016) (Lactobacillus reuteri), this protein is Ornithine carbamoyltransferase.